A 447-amino-acid polypeptide reads, in one-letter code: MTLENNMDKKLFCISTYGCQMNEEDSEKLSGMLKSQGYERTENKEEASIIIFNTCCVRENAENKVFGNLGQLKQLKKKNPNLVIAICGCMMQQVGMADKVLKTFPYVDIIFGTHNAHKFPEYLHRVLQEGVQVKEILNKEEGIVEGLPIDRKSDVKAFVTIMYGCNNFCTYCIVPYVRGRERSRKSEDIIKEIEELVSQGYKEITLLGQNVNSYGKGLEEDIDFAGLLRKVNEVKGLERVRFMTSHPKDLSDDVIMAIKECDKLCEQVHLPVQSGSSRILKEMNRHYDREYYLDLVKKIKSEIPDVTLTTDIIIGFPGETEEDFLDTLSLCEEVGYDSAFTFIYSRRNHTPADKMENQIPDDIKHDRFNRLVEAINKKVVIKNKEYEGKVVEVLVEGPSKNDETKLTGRTRNGKLVNFAGDEKLVGELVNLKIVRAQPFSLIGEIVE.

One can recognise an MTTase N-terminal domain in the interval 10-128 (KLFCISTYGC…FPEYLHRVLQ (119 aa)). [4Fe-4S] cluster-binding residues include Cys19, Cys55, Cys89, Cys165, Cys169, and Cys172. One can recognise a Radical SAM core domain in the interval 151–382 (RKSDVKAFVT…EAINKKVVIK (232 aa)). Residues 384–447 (KEYEGKVVEV…PFSLIGEIVE (64 aa)) form the TRAM domain.

It belongs to the methylthiotransferase family. MiaB subfamily. Monomer. [4Fe-4S] cluster is required as a cofactor.

It is found in the cytoplasm. It carries out the reaction N(6)-dimethylallyladenosine(37) in tRNA + (sulfur carrier)-SH + AH2 + 2 S-adenosyl-L-methionine = 2-methylsulfanyl-N(6)-dimethylallyladenosine(37) in tRNA + (sulfur carrier)-H + 5'-deoxyadenosine + L-methionine + A + S-adenosyl-L-homocysteine + 2 H(+). Its function is as follows. Catalyzes the methylthiolation of N6-(dimethylallyl)adenosine (i(6)A), leading to the formation of 2-methylthio-N6-(dimethylallyl)adenosine (ms(2)i(6)A) at position 37 in tRNAs that read codons beginning with uridine. This Clostridium perfringens (strain ATCC 13124 / DSM 756 / JCM 1290 / NCIMB 6125 / NCTC 8237 / Type A) protein is tRNA-2-methylthio-N(6)-dimethylallyladenosine synthase.